Reading from the N-terminus, the 275-residue chain is Large ribosomal subunit protein uL2 (275 aa).

Positions Arg218–Lys275 are disordered. Residues Tyr257–Lys275 show a composition bias toward basic residues.

This sequence belongs to the universal ribosomal protein uL2 family. In terms of assembly, part of the 50S ribosomal subunit. Forms a bridge to the 30S subunit in the 70S ribosome.

Functionally, one of the primary rRNA binding proteins. Required for association of the 30S and 50S subunits to form the 70S ribosome, for tRNA binding and peptide bond formation. It has been suggested to have peptidyltransferase activity; this is somewhat controversial. Makes several contacts with the 16S rRNA in the 70S ribosome. The polypeptide is Large ribosomal subunit protein uL2 (Sulfurovum sp. (strain NBC37-1)).